A 47-amino-acid chain; its full sequence is Photosystem II reaction center protein K (47 aa).

Positions Met1 to Ala10 are excised as a propeptide. The helical transmembrane segment at Leu26–Phe46 threads the bilayer.

The protein belongs to the PsbK family. As to quaternary structure, PSII is composed of 1 copy each of membrane proteins PsbA, PsbB, PsbC, PsbD, PsbE, PsbF, PsbH, PsbI, PsbJ, PsbK, PsbL, PsbM, PsbT, PsbX, PsbY, Psb30/Ycf12, peripheral proteins PsbO, CyanoQ (PsbQ), PsbU, PsbV and a large number of cofactors. It forms dimeric complexes.

It is found in the cellular thylakoid membrane. One of the components of the core complex of photosystem II (PSII). PSII is a light-driven water:plastoquinone oxidoreductase that uses light energy to abstract electrons from H(2)O, generating O(2) and a proton gradient subsequently used for ATP formation. It consists of a core antenna complex that captures photons, and an electron transfer chain that converts photonic excitation into a charge separation. This Prochlorococcus marinus (strain NATL1A) protein is Photosystem II reaction center protein K.